Here is a 244-residue protein sequence, read N- to C-terminus: Orotidine 5'-phosphate decarboxylase (244 aa).

Residues D12, K34, 61 to 70 (DLKLFDIPNT), T125, R187, Q196, G216, and R217 contribute to the substrate site. K63 (proton donor) is an active-site residue.

This sequence belongs to the OMP decarboxylase family. Type 1 subfamily. In terms of assembly, homodimer.

The catalysed reaction is orotidine 5'-phosphate + H(+) = UMP + CO2. It functions in the pathway pyrimidine metabolism; UMP biosynthesis via de novo pathway; UMP from orotate: step 2/2. In terms of biological role, catalyzes the decarboxylation of orotidine 5'-monophosphate (OMP) to uridine 5'-monophosphate (UMP). The sequence is that of Orotidine 5'-phosphate decarboxylase from Dictyoglomus thermophilum (strain ATCC 35947 / DSM 3960 / H-6-12).